The chain runs to 740 residues: Polyribonucleotide nucleotidyltransferase (740 aa).

The Mg(2+) site is built by Asp496 and Asp502. Residues 563-622 enclose the KH domain; the sequence is PAIIRTSIHPDKIRDIIGPGGKIIKKLVEETGADIDIEDDGRVFIAAVDREKGKRALEII. The S1 motif domain maps to 632-706; it reads GKLYNGKVTR…QQGRLKLSKK (75 aa). Residues 707–740 form a disordered region; it reads EAMRDMGLAPAESTSEQPEKRERRPFSRPKATKE. Positions 723–740 are enriched in basic and acidic residues; the sequence is QPEKRERRPFSRPKATKE.

It belongs to the polyribonucleotide nucleotidyltransferase family. It depends on Mg(2+) as a cofactor.

It localises to the cytoplasm. The catalysed reaction is RNA(n+1) + phosphate = RNA(n) + a ribonucleoside 5'-diphosphate. Involved in mRNA degradation. Catalyzes the phosphorolysis of single-stranded polyribonucleotides processively in the 3'- to 5'-direction. The sequence is that of Polyribonucleotide nucleotidyltransferase from Desulforamulus reducens (strain ATCC BAA-1160 / DSM 100696 / MI-1) (Desulfotomaculum reducens).